The primary structure comprises 238 residues: Putative pectate lyase X (238 aa).

A signal peptide spans 1 to 22 (MKYLLPTAAAGLLLLAAQPAMA). 3 residues coordinate Ca(2+): D153, E188, and D192.

It belongs to the polysaccharide lyase 1 family. It depends on Ca(2+) as a cofactor.

The enzyme catalyses Eliminative cleavage of (1-&gt;4)-alpha-D-galacturonan to give oligosaccharides with 4-deoxy-alpha-D-galact-4-enuronosyl groups at their non-reducing ends.. Its pathway is glycan metabolism; pectin degradation; 2-dehydro-3-deoxy-D-gluconate from pectin: step 2/5. Functionally, involved in maceration and soft-rotting of plant tissue. The polypeptide is Putative pectate lyase X (PEL X) (Pectobacterium carotovorum (Erwinia carotovora)).